The primary structure comprises 427 residues: BRO1 domain-containing protein BROX homolog (427 aa).

One can recognise a BRO1 domain in the interval 1 to 427; that stretch reads MSHWFHRNPI…PSNSSGCVIA (427 aa).

It belongs to the BROX family.

This Caenorhabditis elegans protein is BRO1 domain-containing protein BROX homolog.